A 458-amino-acid chain; its full sequence is Ammonium transporter Rh type B (458 aa).

Over Met1 to Leu13 the chain is Cytoplasmic. A helical membrane pass occupies residues Gln14–Val34. Residues Arg35–Tyr61 lie on the Extracellular side of the membrane. Asn49 carries N-linked (GlcNAc...) asparagine glycosylation. A helical membrane pass occupies residues Pro62–Leu82. Residues Gln83–Gly86 lie on the Cytoplasmic side of the membrane. Residues Phe87 to Val107 form a helical membrane-spanning segment. The Extracellular segment spans residues Gln108–Glu124. Residues Ser125–Gly145 form a helical membrane-spanning segment. Topologically, residues Lys146–Pro149 are cytoplasmic. The chain crosses the membrane as a helical span at residues Ala150 to Leu170. Topologically, residues Leu171–Asp178 are extracellular. Residues Ala179 to Tyr201 traverse the membrane as a helical segment. Topologically, residues Arg202 to Asp219 are cytoplasmic. The helical transmembrane segment at Leu220–Leu240 threads the bilayer. The Extracellular segment spans residues Thr241–Ala251. A helical membrane pass occupies residues Leu252–Val272. Over Gly273–His282 the chain is Cytoplasmic. A helical transmembrane segment spans residues Ile283–Thr303. A topological domain (extracellular) is located at residue Pro304. Residues Phe305 to Phe325 form a helical membrane-spanning segment. The Cytoplasmic segment spans residues Arg326 to Gly346. Residues Met347–Ala367 traverse the membrane as a helical segment. Over Tyr368–Gln393 the chain is Extracellular. The helical transmembrane segment at Leu394 to Leu414 threads the bilayer. Residues Leu415–Ala458 are Cytoplasmic-facing. An interaction with ANK3 region spans residues Lys416–Pro424. A Basolateral sorting signal motif is present at residues Tyr429–Gln432. The disordered stretch occupies residues Gly439–Ala458.

The protein belongs to the ammonium transporter (TC 2.A.49) family. Rh subfamily. As to quaternary structure, interacts (via C-terminus) with ANK2 and ANK3; required for targeting to the basolateral membrane. Post-translationally, N-glycosylated.

It is found in the cell membrane. The protein resides in the basolateral cell membrane. The enzyme catalyses NH4(+)(in) = NH4(+)(out). The catalysed reaction is methylamine(out) = methylamine(in). It carries out the reaction CO2(out) = CO2(in). Ammonium transporter involved in the maintenance of acid-base homeostasis. Transports ammonium and its related derivative methylammonium across the basolateral plasma membrane of epithelial cells likely contributing to renal transepithelial ammonia transport and ammonia metabolism. May transport either NH4(+) or NH3 ammonia species predominantly mediating an electrogenic NH4(+) transport. May act as a CO2 channel providing for renal acid secretion. The chain is Ammonium transporter Rh type B (RHBG) from Pan troglodytes (Chimpanzee).